We begin with the raw amino-acid sequence, 265 residues long: Hemin import ATP-binding protein HmuV (265 aa).

Positions 13–249 (LKASNLHLQL…TAVENVYGWP (237 aa)) constitute an ABC transporter domain. ATP is bound at residue 45 to 52 (GPNGAGKS).

It belongs to the ABC transporter superfamily. Heme (hemin) importer (TC 3.A.1.14.5) family. The complex is composed of two ATP-binding proteins (HmuV), two transmembrane proteins (HmuU) and a solute-binding protein (HmuT).

The protein resides in the cell inner membrane. In terms of biological role, part of the ABC transporter complex HmuTUV involved in hemin import. Responsible for energy coupling to the transport system. The chain is Hemin import ATP-binding protein HmuV from Photobacterium damselae subsp. damselae (Listonella damsela).